A 241-amino-acid polypeptide reads, in one-letter code: Probable transcriptional regulatory protein Maqu_2154 (241 aa).

This sequence belongs to the TACO1 family.

It localises to the cytoplasm. This chain is Probable transcriptional regulatory protein Maqu_2154, found in Marinobacter nauticus (strain ATCC 700491 / DSM 11845 / VT8) (Marinobacter aquaeolei).